A 558-amino-acid polypeptide reads, in one-letter code: 2-isopropylmalate synthase (558 aa).

The 274-residue stretch at 30 to 303 folds into the Pyruvate carboxyltransferase domain; sequence PIWCSVDLRD…DPKLDCSDIE (274 aa). Asp-39, His-242, His-244, and Asn-278 together coordinate Mg(2+). The interval 437–558 is regulatory domain; the sequence is QPGARIKFVD…ANRVLDVVGK (122 aa).

This sequence belongs to the alpha-IPM synthase/homocitrate synthase family. LeuA type 2 subfamily. As to quaternary structure, homodimer. It depends on Mg(2+) as a cofactor.

It localises to the cytoplasm. It catalyses the reaction 3-methyl-2-oxobutanoate + acetyl-CoA + H2O = (2S)-2-isopropylmalate + CoA + H(+). The protein operates within amino-acid biosynthesis; L-leucine biosynthesis; L-leucine from 3-methyl-2-oxobutanoate: step 1/4. Its function is as follows. Catalyzes the condensation of the acetyl group of acetyl-CoA with 3-methyl-2-oxobutanoate (2-ketoisovalerate) to form 3-carboxy-3-hydroxy-4-methylpentanoate (2-isopropylmalate). In Rhizobium meliloti (strain 1021) (Ensifer meliloti), this protein is 2-isopropylmalate synthase.